Consider the following 800-residue polypeptide: DNA topoisomerase 4 subunit A (800 aa).

Residues 31-495 form the Topo IIA-type catalytic domain; sequence LPDVRDGLKP…EIEEIKIDKE (465 aa). Y119 (O-(5'-phospho-DNA)-tyrosine intermediate) is an active-site residue.

The protein belongs to the type II topoisomerase GyrA/ParC subunit family. ParC type 2 subfamily. In terms of assembly, heterotetramer composed of ParC and ParE.

It is found in the cell membrane. It carries out the reaction ATP-dependent breakage, passage and rejoining of double-stranded DNA.. Its function is as follows. Topoisomerase IV is essential for chromosome segregation. It relaxes supercoiled DNA. Performs the decatenation events required during the replication of a circular DNA molecule. The protein is DNA topoisomerase 4 subunit A of Staphylococcus aureus (strain MRSA252).